We begin with the raw amino-acid sequence, 211 residues long: Adenylyl-sulfate kinase (211 aa).

32-39 (GLSASGKS) provides a ligand contact to ATP. Catalysis depends on Ser107, which acts as the Phosphoserine intermediate.

This sequence belongs to the APS kinase family. As to quaternary structure, homodimer.

The catalysed reaction is adenosine 5'-phosphosulfate + ATP = 3'-phosphoadenylyl sulfate + ADP + H(+). It participates in sulfur metabolism; hydrogen sulfide biosynthesis; sulfite from sulfate: step 2/3. Catalyzes the synthesis of activated sulfate. This is Adenylyl-sulfate kinase from Penicillium chrysogenum (Penicillium notatum).